We begin with the raw amino-acid sequence, 185 residues long: A-type ATP synthase subunit E (185 aa).

This sequence belongs to the V-ATPase E subunit family. Has multiple subunits with at least A(3), B(3), C, D, E, F, H, I and proteolipid K(x).

It is found in the cell membrane. In terms of biological role, component of the A-type ATP synthase that produces ATP from ADP in the presence of a proton gradient across the membrane. The polypeptide is A-type ATP synthase subunit E (Thermoplasma acidophilum (strain ATCC 25905 / DSM 1728 / JCM 9062 / NBRC 15155 / AMRC-C165)).